The following is a 119-amino-acid chain: Large ribosomal subunit protein bL20 (119 aa).

Belongs to the bacterial ribosomal protein bL20 family.

In terms of biological role, binds directly to 23S ribosomal RNA and is necessary for the in vitro assembly process of the 50S ribosomal subunit. It is not involved in the protein synthesizing functions of that subunit. This Bordetella petrii (strain ATCC BAA-461 / DSM 12804 / CCUG 43448) protein is Large ribosomal subunit protein bL20.